The following is a 559-amino-acid chain: DNA primase (559 aa).

Residues 37–61 form a CHC2-type zinc finger; sequence CPFHEERSASFSVNQVKGFYYCFGC. The region spanning 246–327 is the Toprim domain; it reads KQVIVTEGYL…KGGVILFENN (82 aa). Residues E252, D296, and D298 each coordinate Mg(2+).

The protein belongs to the DnaG primase family. In terms of assembly, monomer. Interacts with DnaB. The cofactor is Zn(2+). Mg(2+) serves as cofactor.

It carries out the reaction ssDNA + n NTP = ssDNA/pppN(pN)n-1 hybrid + (n-1) diphosphate.. Its function is as follows. RNA polymerase that catalyzes the synthesis of short RNA molecules used as primers for DNA polymerase during DNA replication. In Helicobacter pylori (strain J99 / ATCC 700824) (Campylobacter pylori J99), this protein is DNA primase.